The chain runs to 187 residues: Large ribosomal subunit protein uL5 (187 aa).

Belongs to the universal ribosomal protein uL5 family. As to quaternary structure, part of the 50S ribosomal subunit; part of the 5S rRNA/L5/L18/L25 subcomplex. Contacts the 5S rRNA and the P site tRNA. Forms a bridge to the 30S subunit in the 70S ribosome.

Functionally, this is one of the proteins that bind and probably mediate the attachment of the 5S RNA into the large ribosomal subunit, where it forms part of the central protuberance. In the 70S ribosome it contacts protein S13 of the 30S subunit (bridge B1b), connecting the 2 subunits; this bridge is implicated in subunit movement. Contacts the P site tRNA; the 5S rRNA and some of its associated proteins might help stabilize positioning of ribosome-bound tRNAs. The sequence is that of Large ribosomal subunit protein uL5 from Roseobacter denitrificans (strain ATCC 33942 / OCh 114) (Erythrobacter sp. (strain OCh 114)).